Consider the following 145-residue polypeptide: uncharacterized protein (145 aa).

A signal peptide spans 1 to 23 (MSSSNLSSRKTRISAHFLDAAPA). Residues 123–140 (VLLLIIALVFLLFVAIFI) traverse the membrane as a helical segment.

The protein resides in the membrane. This is an uncharacterized protein from Archaeoglobus fulgidus (strain ATCC 49558 / DSM 4304 / JCM 9628 / NBRC 100126 / VC-16).